Reading from the N-terminus, the 551-residue chain is Oleuropein beta-glucosidase (551 aa).

A compositionally biased stretch (polar residues) spans 1–27; that stretch reads MDIQSNVLTITSGSTPTDTSSNGQAAK. The segment at 1-33 is disordered; it reads MDIQSNVLTITSGSTPTDTSSNGQAAKSTKERI. A beta-D-glucoside-binding positions include Q52, H156, 201 to 202, Y363, E433, W482, 489 to 490, and F498; these read NE and EW. E202 serves as the catalytic Proton donor. The active-site Nucleophile is E433. The interval 502-551 is required for the homomultimerization; the sequence is YVDYANGRYTRLPKRSAVWWRNFLTKPTAVPLKNEPEKSEDRRKRLRGST. Residues 532-551 are disordered; it reads PLKNEPEKSEDRRKRLRGST. The span at 535–544 shows a compositional bias: basic and acidic residues; that stretch reads NEPEKSEDRR. The short motif at 542-550 is the Nuclear localization signal element; the sequence is DRRKRLRGS.

It belongs to the glycosyl hydrolase 1 family. Homomultimer. Native form of the enzyme requires at least an octamer conformation. Expressed in expanding leaves and in young drupes, mostly in the developing seed coat tissues, the perisperm and the mesocarp. Also detected in shoot and root meristems, flower buds, developing ovaries and tapetal cells of the anther. Not detected in embryos or endosperm, or in leaf trichomes.

Its subcellular location is the nucleus. The enzyme catalyses oleuropein + H2O = oleuropein aglycone + D-glucose. Functionally, major beta-glucosidase activating oleuropein into a potent protein cross-linking agent. No activity with rutin, luteolin or p-nitrophenyl-beta-glucopyranoside as substrates. This is Oleuropein beta-glucosidase from Olea europaea (Common olive).